The chain runs to 478 residues: UDP-glycosyltransferase 71B5 (478 aa).

UDP-alpha-D-glucose contacts are provided by residues serine 280, alanine 347 to glutamine 349, histidine 364 to glutamate 372, and tyrosine 386 to glutamine 389.

This sequence belongs to the UDP-glycosyltransferase family.

Its function is as follows. Possesses low quercetin 3-O-glucosyltransferase activity in vitro. This chain is UDP-glycosyltransferase 71B5 (UGT71B5), found in Arabidopsis thaliana (Mouse-ear cress).